The primary structure comprises 100 residues: NADH-quinone oxidoreductase subunit K (100 aa).

Helical transmembrane passes span 4–24, 28–48, and 60–80; these read YEYY…GVIV, IIAM…AFVA, and VFVF…LGLI.

Belongs to the complex I subunit 4L family. In terms of assembly, NDH-1 is composed of 14 different subunits. Subunits NuoA, H, J, K, L, M, N constitute the membrane sector of the complex.

The protein localises to the cell inner membrane. It carries out the reaction a quinone + NADH + 5 H(+)(in) = a quinol + NAD(+) + 4 H(+)(out). Its function is as follows. NDH-1 shuttles electrons from NADH, via FMN and iron-sulfur (Fe-S) centers, to quinones in the respiratory chain. The immediate electron acceptor for the enzyme in this species is believed to be ubiquinone. Couples the redox reaction to proton translocation (for every two electrons transferred, four hydrogen ions are translocated across the cytoplasmic membrane), and thus conserves the redox energy in a proton gradient. This is NADH-quinone oxidoreductase subunit K from Sulfurihydrogenibium azorense (strain DSM 15241 / OCM 825 / Az-Fu1).